The sequence spans 149 residues: Urease accessory protein UreE (149 aa).

It belongs to the UreE family.

It localises to the cytoplasm. Functionally, involved in urease metallocenter assembly. Binds nickel. Probably functions as a nickel donor during metallocenter assembly. The polypeptide is Urease accessory protein UreE (Prochlorococcus marinus (strain AS9601)).